The primary structure comprises 508 residues: Tryptamine 4-monooxygenase (508 aa).

The first 19 residues, 1-19, serve as a signal peptide directing secretion; that stretch reads MIAVLFSFVIAGCIYYIVS. Cys439 lines the heme pocket.

Belongs to the cytochrome P450 family. Requires heme as cofactor.

It carries out the reaction tryptamine + AH2 + O2 = 4-hydroxytryptamine + A + H2O. Its pathway is secondary metabolite biosynthesis. In terms of biological role, cytochrome P450 monooxygenase; part of the gene cluster that mediates the biosynthesis of psilocybin, a psychotropic tryptamine-derived natural product. The first step in the pathway is the decarboxylation of L-tryptophan to tryptamine by the decarboxylase psiD. 4-hydroxy-L-tryptophan is accepted as substrate by psiD as well. The cytochrome P450 monooxygenase psiH then converts tryptamine to 4-hydroxytryptamine. The kinase psiK catalyzes the 4-O-phosphorylation step by converting 4-hydroxytryptamine into norbaeocystin. The methyltransferase psiM then catalyzes iterative methyl transfer to the amino group of norbaeocystin to yield psilocybin via a monomethylated intermediate, baeocystin. In Psilocybe cubensis (Psychedelic mushroom), this protein is Tryptamine 4-monooxygenase.